We begin with the raw amino-acid sequence, 300 residues long: Rhodopsin (300 aa).

The Extracellular portion of the chain corresponds to 1-18 (LHMIHLHWYQYPPMNPMM). A helical transmembrane segment spans residues 19 to 43 (YPLLLVFMLITGILCLAGNFVTIWV). Residues 44–55 (FMNTKSLRTPAN) lie on the Cytoplasmic side of the membrane. Residues 56–78 (LLVVNLAMSDFLMMFTMFPPMMV) traverse the membrane as a helical segment. At 79-92 (TCYYHTWTLGATFC) the chain is on the extracellular side. A disulfide bridge connects residues cysteine 92 and cysteine 168. The helical transmembrane segment at 93-115 (QVYAFLGNLCGCASIWTMVFITF) threads the bilayer. The short motif at 116–118 (DRY) is the 'Ionic lock' involved in activated form stabilization element. Residues 116–134 (DRYNVIVKGVAGEPLSTKK) lie on the Cytoplasmic side of the membrane. A helical membrane pass occupies residues 135 to 155 (ASLWILTIWILSITWCIAPFF). Topologically, residues 156 to 181 (GWNRYVPEGNTGCGTDYLSEDILSRS) are extracellular. A helical membrane pass occupies residues 182-203 (YLYIYSTWVYFLPLAITIYCHV). The Cytoplasmic portion of the chain corresponds to 204–244 (FIIKAVAAHEKGMRDQAKKMGIKSLRNEEAQKTSAECRLAK). A helical transmembrane segment spans residues 245–266 (IAMTTVALWFIAWTPYLLINWV). Residues 267 to 277 (GMFARSYLSPV) lie on the Extracellular side of the membrane. Residues 278 to 299 (YTIWGYVFAKANAVYNPIVYAI) traverse the membrane as a helical segment. Lysine 287 is subject to N6-(retinylidene)lysine.

The protein belongs to the G-protein coupled receptor 1 family. Opsin subfamily. As to quaternary structure, homodimer. Interacts with GNAQ. Post-translationally, contains one covalently linked retinal chromophore.

It localises to the cell projection. The protein resides in the rhabdomere membrane. Functionally, photoreceptor required for image-forming vision at low light intensity. Can use both retinal and 3-dehydroretinal as visual pigment. Light-induced isomerization of 11-cis to all-trans retinal triggers a conformational change that activates signaling via G-proteins. Signaling via GNAQ probably mediates the activation of phospholipase C. The polypeptide is Rhodopsin (RHO) (Cambarus maculatus (Freckled crayfish)).